A 204-amino-acid polypeptide reads, in one-letter code: Imidazoleglycerol-phosphate dehydratase (204 aa).

This sequence belongs to the imidazoleglycerol-phosphate dehydratase family.

The protein localises to the cytoplasm. It catalyses the reaction D-erythro-1-(imidazol-4-yl)glycerol 3-phosphate = 3-(imidazol-4-yl)-2-oxopropyl phosphate + H2O. The protein operates within amino-acid biosynthesis; L-histidine biosynthesis; L-histidine from 5-phospho-alpha-D-ribose 1-diphosphate: step 6/9. The sequence is that of Imidazoleglycerol-phosphate dehydratase from Rhodococcus jostii (strain RHA1).